A 389-amino-acid polypeptide reads, in one-letter code: SH3 and F-BAR domain-containing protein DDB_G0274695 (389 aa).

Residues Glu-3–Asp-258 form the F-BAR domain. The stretch at Lys-119–Leu-192 forms a coiled coil. A compositionally biased stretch (low complexity) spans Leu-300 to Pro-328. Residues Leu-300–Ile-329 form a disordered region. The region spanning Ser-332–Ile-389 is the SH3 domain.

In Dictyostelium discoideum (Social amoeba), this protein is SH3 and F-BAR domain-containing protein DDB_G0274695.